The following is a 279-amino-acid chain: Diaminopimelate epimerase (279 aa).

Residues asparagine 14 and glutamine 68 each contribute to the substrate site. Cysteine 77 functions as the Proton donor in the catalytic mechanism. Substrate contacts are provided by residues 78-79, asparagine 191, and 207-208; these read GN and ER. The Proton acceptor role is filled by cysteine 217. 218 to 219 is a substrate binding site; the sequence is GT.

This sequence belongs to the diaminopimelate epimerase family. As to quaternary structure, homodimer.

The protein localises to the cytoplasm. It carries out the reaction (2S,6S)-2,6-diaminopimelate = meso-2,6-diaminopimelate. It participates in amino-acid biosynthesis; L-lysine biosynthesis via DAP pathway; DL-2,6-diaminopimelate from LL-2,6-diaminopimelate: step 1/1. In terms of biological role, catalyzes the stereoinversion of LL-2,6-diaminopimelate (L,L-DAP) to meso-diaminopimelate (meso-DAP), a precursor of L-lysine. In Methanothrix thermoacetophila (strain DSM 6194 / JCM 14653 / NBRC 101360 / PT) (Methanosaeta thermophila), this protein is Diaminopimelate epimerase.